A 364-amino-acid polypeptide reads, in one-letter code: Mannose-1-phosphate guanyltransferase (364 aa).

Belongs to the transferase hexapeptide repeat family.

The protein localises to the cytoplasm. The enzyme catalyses alpha-D-mannose 1-phosphate + GTP + H(+) = GDP-alpha-D-mannose + diphosphate. Its pathway is nucleotide-sugar biosynthesis; GDP-alpha-D-mannose biosynthesis; GDP-alpha-D-mannose from alpha-D-mannose 1-phosphate (GTP route): step 1/1. Functionally, involved in cell wall synthesis where it is required for glycosylation. Involved in cell cycle progression through cell-size checkpoint. The sequence is that of Mannose-1-phosphate guanyltransferase (MPG1) from Pichia angusta (Yeast).